The sequence spans 1368 residues: Cingulin (1368 aa).

The interval 9–378 (MADQHIPVGQ…KQQRTVQSEF (370 aa)) is interaction with TJP3/ZO3 and myosin. A head region spans residues 9–435 (MADQHIPVGQ…EKLPSLQVQP (427 aa)). The ZIM signature appears at 41 to 55 (QDSYGVAVRVQGIDG). Disordered stretches follow at residues 71 to 264 (FGVQ…TKPL), 278 to 312 (GQVR…DTAD), 1053 to 1080 (SRKE…NSSR), 1163 to 1183 (NRSR…RSRG), and 1308 to 1368 (QQEI…TSSC). A compositionally biased stretch (polar residues) spans 83-97 (NASNTSPPNYQNYSS). The segment at 101-294 (GPSRSISSES…ARRSQALKDE (194 aa)) is interaction with F-actin. Low complexity-rich tracts occupy residues 116–132 (PYGS…YSSA) and 200–211 (SQSSRDSAWSRS). The interval 150-295 (SSLPRPLQAS…RRSQALKDER (146 aa)) is interaction with TJP2/ZO2. The segment covering 228 to 256 (SATSQQSTSVSNKTKKNGLSTSSPSNQSN) has biased composition (polar residues). Positions 290 to 312 (ALKDERKRSQSLDGRKNYHDTAD) are enriched in basic and acidic residues. The interval 377 to 1368 (EFQLKSTPDL…TESNLQTSSC (992 aa)) is interaction with myosin. Residues 436–1330 (GEDTISLGSQ…VMEKESKRKP (895 aa)) are a coiled coil. Over residues 1320-1338 (KVMEKESKRKPIRPAHDDD) the composition is skewed to basic and acidic residues. The interval 1331 to 1368 (IRPAHDDDLSSDGEFGGPYDPSSITSLLTESNLQTSSC) is tail. Positions 1352–1368 (SSITSLLTESNLQTSSC) are enriched in polar residues.

Belongs to the cingulin family. As to quaternary structure, parallel homodimer. Interacts with TJP1/ZO1 and TJP2/ZO2 in vivo, and TJP3/ZO3, myosin and OCLN in vitro, possibly directly. Acts as an F-actin bundling protein in vitro. Localized on the cytoplasmic face of tight junctions of polarized epithelia and some endothelia.

It localises to the cell junction. The protein localises to the tight junction. Its function is as follows. Probably plays a role in the formation and regulation of the tight junction (TJ) paracellular permeability barrier, possibly by linking ZO proteins to the actomyosin cytoskeleton. The polypeptide is Cingulin (Xenopus laevis (African clawed frog)).